The sequence spans 759 residues: Cullin-4A (759 aa).

Residues 1–40 form a disordered region; it reads MADEGPRKGSVSALMGRTNGLTKPAALAGGPAKPGGTGGS. Residue Lys-8 forms a Glycyl lysine isopeptide (Lys-Gly) (interchain with G-Cter in SUMO2) linkage. Residue Ser-10 is modified to Phosphoserine. Positions 20-31 are enriched in low complexity; sequence GLTKPAALAGGP. Residue Lys-33 forms a Glycyl lysine isopeptide (Lys-Gly) (interchain with G-Cter in ubiquitin) linkage. A Cullin neddylation domain is found at 691-750; it reads DRQYQIDAAIVRIMKMRKTLGHNLLVSELYNQLKFPVKPGDLKKRIESLIDRDYMERDKD. Lys-705 is covalently cross-linked (Glycyl lysine isopeptide (Lys-Gly) (interchain with G-Cter in NEDD8)).

Belongs to the cullin family. As to quaternary structure, can self-associate. Component of multiple DCX (DDB1-CUL4-X-box) E3 ubiquitin-protein ligase complexes that seem to consist of DDB1, CUL4A or CUL4B, RBX1 and a variable substrate recognition component which seems to belong to a protein family described as DCAF (Ddb1- and Cul4-associated factor) or CDW (CUL4-DDB1-associated WD40-repeat) proteins. Component of the CSA complex (DCX(ERCC8) complex) containing ERCC8, RBX1, DDB1 and CUL4A; the CSA complex interacts with RNA polymerase II; upon UV irradiation it interacts with the COP9 signalosome and preferentially with the hyperphosphorylated form of RNA polymerase II. Component of the DCX(DET1-COP1) complex with the substrate recognition component DET1 and COP1. Component of the DCX(DDB2) complex with the substrate recognition component DDB2. Component of the DCX(DTL) complex with the putative substrate recognition component DTL. Component of DCX complexes part of the DesCEND (destruction via C-end degrons) pathway, which contain either TRPC4AP or DCAF12 as substrate-recognition component. Component of the DCX(AMBRA1) complex with the substrate recognition component AMBRA1. Interacts with DDB1, RBX1, RNF7, CDT1, TIP120A/CAND1, SKP2, CDKN1B, MDM2, TP53 and HOXA9. Interacts with DDB2; the interactions with DDB2 and CAND1 are mutually exclusive. Interacts with DCAF1, DTL, DDA1, DCAF6, DCAF4, DCAF16, DCAF17, DET1, WDTC1, DCAF5, DCAF11, WDR24A, COP1, PAFAH1B1, ERCC8, GRWD1, FBXW5, RBBP7, GNB2, WSB1, WSB2, NUP43, PWP1, FBXW8, ATG16L1, KATNB1, RBBP4, RBBP5, LRWD1 and DCAF8. May interact with WDR26, WDR51B, SNRNP40, WDR61, WDR76, WDR5. Interacts (when neddylated) with ARIH1; leading to activate the E3 ligase activity of ARIH1. The DDB1-CUL4A complex interacts with CRY1. Interacts (unneddylated form) with DCUN1D1, DCUN1D2, DCUN1D3, DCUN1D4 and DCUN1D5; these interactions promote the cullin neddylation. In terms of assembly, (Microbial infection) Interacts with murine cytomegalovirus M48. Post-translationally, neddylated; required for activity of cullin-RING-based E3 ubiquitin-protein ligase complexes. Deneddylated via its interaction with the COP9 signalosome (CSN) complex. In terms of processing, (Microbial infection) Deneddylated by murine cytomegalovirus M48 leading to a S-phase-like environment that is required for efficient replication of the viral genome. Expressed in oocytes (at protein level). In the ovary, also expressed in cumulus cells. Expressed in testis, spleen and kidney.

It functions in the pathway protein modification; protein ubiquitination. In terms of biological role, core component of multiple cullin-RING-based E3 ubiquitin-protein ligase complexes which mediate the ubiquitination of target proteins. As a scaffold protein may contribute to catalysis through positioning of the substrate and the ubiquitin-conjugating enzyme. The E3 ubiquitin-protein ligase activity of the complex is dependent on the neddylation of the cullin subunit and is inhibited by the association of the deneddylated cullin subunit with TIP120A/CAND1. The functional specificity of the E3 ubiquitin-protein ligase complex depends on the variable substrate recognition component. DCX(DET1-COP1) directs ubiquitination of JUN. DCX(DDB2) directs ubiquitination of XPC. DCX(DDB2) ubiquitinates histones H3-H4 and is required for efficient histone deposition during replication-coupled (H3.1) and replication-independent (H3.3) nucleosome assembly, probably by facilitating the transfer of H3 from ASF1A/ASF1B to other chaperones involved in histone deposition. DCX(DTL) plays a role in PCNA-dependent polyubiquitination of CDT1 and MDM2-dependent ubiquitination of p53/TP53 in response to radiation-induced DNA damage and during DNA replication. DCX(DTL) directs autoubiquitination of DTL. In association with DDB1 and SKP2 probably is involved in ubiquitination of CDKN1B/p27kip. Is involved in ubiquitination of HOXA9. The DDB1-CUL4A-DTL E3 ligase complex regulates the circadian clock function by mediating the ubiquitination and degradation of CRY1. The DCX(ERCC8) complex (also named CSA complex) plays a role in transcription-coupled repair (TCR). A number of DCX complexes (containing either TRPC4AP or DCAF12 as substrate-recognition component) are part of the DesCEND (destruction via C-end degrons) pathway, which recognizes a C-degron located at the extreme C terminus of target proteins, leading to their ubiquitination and degradation. With CUL4B, contributes to ribosome biogenesis. The DCX(AMBRA1) complex is a master regulator of the transition from G1 to S cell phase by mediating ubiquitination of phosphorylated cyclin-D (CCND1, CCND2 and CCND3). The DCX(AMBRA1) complex also acts as a regulator of Cul5-RING (CRL5) E3 ubiquitin-protein ligase complexes by mediating ubiquitination and degradation of Elongin-C (ELOC) component of CRL5 complexes. The protein is Cullin-4A of Mus musculus (Mouse).